The sequence spans 332 residues: DNA-directed RNA polymerase subunit alpha (332 aa).

The interval 1-232 (MQVSNFLKPR…DQLTAFVELE (232 aa)) is alpha N-terminal domain (alpha-NTD). The interval 246–332 (IDPVLLQPID…LREEETKVTA (87 aa)) is alpha C-terminal domain (alpha-CTD).

Belongs to the RNA polymerase alpha chain family. In terms of assembly, homodimer. The RNAP catalytic core consists of 2 alpha, 1 beta, 1 beta' and 1 omega subunit. When a sigma factor is associated with the core the holoenzyme is formed, which can initiate transcription.

The enzyme catalyses RNA(n) + a ribonucleoside 5'-triphosphate = RNA(n+1) + diphosphate. Its function is as follows. DNA-dependent RNA polymerase catalyzes the transcription of DNA into RNA using the four ribonucleoside triphosphates as substrates. In Nitrosococcus oceani (strain ATCC 19707 / BCRC 17464 / JCM 30415 / NCIMB 11848 / C-107), this protein is DNA-directed RNA polymerase subunit alpha.